The chain runs to 320 residues: Rhomboid-like protein 17, chloroplastic (320 aa).

Residues 1–87 (MHAIFSSFSR…LKFGNVMESR (87 aa)) constitute a chloroplast transit peptide. Helical transmembrane passes span 116–136 (WING…AVFT), 160–180 (LITS…MIGI), 199–219 (LYFA…ALLA), 247–267 (MFAI…YFAL), and 295–315 (IASS…WARI).

This sequence belongs to the peptidase S54 family.

The protein resides in the plastid. The protein localises to the chloroplast membrane. In terms of biological role, probable rhomboid-type serine protease that catalyzes intramembrane proteolysis. This is Rhomboid-like protein 17, chloroplastic from Arabidopsis thaliana (Mouse-ear cress).